The primary structure comprises 461 residues: LL-diaminopimelate aminotransferase, chloroplastic (461 aa).

Residues 1–45 (MSSTHQLVSSMISSSSSTFLAPSNFNLRTRNACLPMAKRVNTCKC) constitute a chloroplast transit peptide. The substrate site is built by Tyr72 and Gly99. Residues Tyr129, 163-164 (AK), Tyr187, Asn244, Tyr275, and 302-304 (SFS) contribute to the pyridoxal 5'-phosphate site. The substrate site is built by Lys164, Tyr187, and Asn244. N6-(pyridoxal phosphate)lysine is present on Lys305. Residues Arg313 and Asn344 each contribute to the pyridoxal 5'-phosphate site. Residues Asn344 and Arg439 each coordinate substrate.

Belongs to the class-I pyridoxal-phosphate-dependent aminotransferase family. LL-diaminopimelate aminotransferase subfamily. In terms of assembly, homodimer. Requires pyridoxal 5'-phosphate as cofactor. As to expression, highly expressed in seedlings, roots, stems, flowers and leaves. Lower expression in siliques.

The protein resides in the plastid. The protein localises to the chloroplast. It carries out the reaction (2S,6S)-2,6-diaminopimelate + 2-oxoglutarate = (S)-2,3,4,5-tetrahydrodipicolinate + L-glutamate + H2O + H(+). Its pathway is amino-acid biosynthesis; L-lysine biosynthesis via DAP pathway; LL-2,6-diaminopimelate from (S)-tetrahydrodipicolinate (aminotransferase route): step 1/1. Functionally, required for lysine biosynthesis. Catalyzes the direct conversion of tetrahydrodipicolinate to LL-diaminopimelate, a reaction that requires three enzymes in E.coli. Not active with meso-diaminopimelate, lysine or ornithine as substrates. The protein is LL-diaminopimelate aminotransferase, chloroplastic (DAP) of Arabidopsis thaliana (Mouse-ear cress).